Reading from the N-terminus, the 116-residue chain is Endocuticle structural glycoprotein ABD-4 (116 aa).

A Pyrrolidone carboxylic acid modification is found at Gln-1. The region spanning Asp-20–Pro-92 is the Chitin-binding type R&amp;R domain. The disordered stretch occupies residues Glu-78–Ala-97. Thr-90 is a glycosylation site (O-linked (GalNAc) threonine; in ADB-4A, ABD-4B and ABD-4C). Thr-107 carries an O-linked (GalNAc) threonine; in ADB-4A and ABD-4B glycan. A glycan (O-linked (GalNAc) threonine; in ADB-4A) is linked at Thr-111. Proline amide is present on Pro-116.

In terms of processing, 3 variants exists that arise from a sequential glycosylation with N-acetylgalactosamine at three (ABD-4A), two (ABD-4B) or one (ABD-4C) threonine residues.

Component of the soft endocuticle of migratory locust. This Locusta migratoria (Migratory locust) protein is Endocuticle structural glycoprotein ABD-4.